Reading from the N-terminus, the 123-residue chain is Thioredoxin domain-containing protein 17 (123 aa).

Ala-2 is modified (N-acetylalanine). A Thioredoxin domain is found at 41–123; the sequence is SWCPDCVEAE…SLVEMIFSED (83 aa). Catalysis depends on nucleophile residues Cys-43 and Cys-46. A disulfide bridge links Cys-43 with Cys-46.

It belongs to the thioredoxin family. In terms of assembly, interacts with TRXR1 and DYNLL1/DNCL1. Post-translationally, the oxidized protein is reduced by TRXR1.

It localises to the cytoplasm. In terms of biological role, disulfide reductase. May participate in various redox reactions through the reversible oxidation of its active center dithiol to a disulfide and catalyze dithiol-disulfide exchange reactions. Modulates TNF-alpha signaling and NF-kappa-B activation. Has peroxidase activity and may contribute to the elimination of cellular hydrogen peroxide. This chain is Thioredoxin domain-containing protein 17 (Txndc17), found in Mus musculus (Mouse).